We begin with the raw amino-acid sequence, 1374 residues long: DNA-directed RNA polymerase subunit beta (1374 aa).

This sequence belongs to the RNA polymerase beta chain family. In terms of assembly, the RNAP catalytic core consists of 2 alpha, 1 beta, 1 beta' and 1 omega subunit. When a sigma factor is associated with the core the holoenzyme is formed, which can initiate transcription.

It carries out the reaction RNA(n) + a ribonucleoside 5'-triphosphate = RNA(n+1) + diphosphate. DNA-dependent RNA polymerase catalyzes the transcription of DNA into RNA using the four ribonucleoside triphosphates as substrates. The chain is DNA-directed RNA polymerase subunit beta from Acidovorax ebreus (strain TPSY) (Diaphorobacter sp. (strain TPSY)).